The sequence spans 307 residues: Ribosomal RNA large subunit methyltransferase F (307 aa).

This sequence belongs to the methyltransferase superfamily. METTL16/RlmF family.

The protein localises to the cytoplasm. It catalyses the reaction adenosine(1618) in 23S rRNA + S-adenosyl-L-methionine = N(6)-methyladenosine(1618) in 23S rRNA + S-adenosyl-L-homocysteine + H(+). In terms of biological role, specifically methylates the adenine in position 1618 of 23S rRNA. The protein is Ribosomal RNA large subunit methyltransferase F of Bacteroides thetaiotaomicron (strain ATCC 29148 / DSM 2079 / JCM 5827 / CCUG 10774 / NCTC 10582 / VPI-5482 / E50).